Here is a 103-residue protein sequence, read N- to C-terminus: Small ribosomal subunit protein uS10 (103 aa).

This sequence belongs to the universal ribosomal protein uS10 family. As to quaternary structure, part of the 30S ribosomal subunit.

Involved in the binding of tRNA to the ribosomes. The protein is Small ribosomal subunit protein uS10 of Ruminiclostridium cellulolyticum (strain ATCC 35319 / DSM 5812 / JCM 6584 / H10) (Clostridium cellulolyticum).